A 327-amino-acid chain; its full sequence is GMP reductase (327 aa).

The active-site Thioimidate intermediate is Cys176. 205–228 provides a ligand contact to NADP(+); it reads IIADGGIRTHGDIAKSIRFGASMV.

This sequence belongs to the IMPDH/GMPR family. GuaC type 2 subfamily.

The catalysed reaction is IMP + NH4(+) + NADP(+) = GMP + NADPH + 2 H(+). Its function is as follows. Catalyzes the irreversible NADPH-dependent deamination of GMP to IMP. It functions in the conversion of nucleobase, nucleoside and nucleotide derivatives of G to A nucleotides, and in maintaining the intracellular balance of A and G nucleotides. In Streptococcus pyogenes serotype M6 (strain ATCC BAA-946 / MGAS10394), this protein is GMP reductase.